The following is a 459-amino-acid chain: MALTVFNTLTRKKQLFEPIQPGHVGIYVCGVTTYDYCHIGHARTYVAFDIVVRYLRKLGYSVKYVRNITDLDDKIIKRAAENGEDFHQVTERFIREMHKDFDALNLVRPDIEPRVTSHMDEIILMIERLIENGNAYEAGNGDVLFDVSTFNDYGKLSRQDLEQLQAGSRVDVDAAKQDPLDFVLWKSAKPGEPSWSSPWGEGRPGWHIECSAMNKKHLGSTFDIHGGGSDLSFPHHENEIAQSCCANQSEYVKYWMHSGMVQVDNEKMSKSLGNFFTIRSVLEQYDAETVRYFLLSSHYRSQLNYTQENLDQAHSALERLYTALRDITPQTASEELRSKYWQSFQQAMDDDLNAPEAMSVLFEIAREINRNRESAPDTAAQLAHVLLELAEVMGLLQQSPEEFLQGDDDDVAKIEALIAKRNQAREDKDWAAADEARDELTNMGIVLEDGAEGTRWRRA.

Cys29 serves as a coordination point for Zn(2+). A 'HIGH' region motif is present at residues 31–41; the sequence is VTTYDYCHIGH. The Zn(2+) site is built by Cys210, His235, and Glu239. The short motif at 267–271 is the 'KMSKS' region element; that stretch reads KMSKS. Lys270 is a binding site for ATP.

It belongs to the class-I aminoacyl-tRNA synthetase family. In terms of assembly, monomer. Zn(2+) is required as a cofactor.

Its subcellular location is the cytoplasm. The enzyme catalyses tRNA(Cys) + L-cysteine + ATP = L-cysteinyl-tRNA(Cys) + AMP + diphosphate. This Idiomarina loihiensis (strain ATCC BAA-735 / DSM 15497 / L2-TR) protein is Cysteine--tRNA ligase.